A 672-amino-acid polypeptide reads, in one-letter code: DNA polymerase eta (672 aa).

The region spanning 14 to 254 (IAHVDMDCFY…LPIKKMKQLG (241 aa)) is the UmuC domain. Mg(2+) contacts are provided by Asp18 and Met19. 2 residues coordinate Mn(2+): Asp18 and Met19. Residues Tyr23 and Arg60 each coordinate a 2'-deoxyribonucleoside 5'-triphosphate. Positions 120 and 121 each coordinate Mg(2+). Residues Asp120 and Glu121 each coordinate Mn(2+). The Proton acceptor role is filled by Glu121. 2 DNA-binding regions span residues 318–325 (KTFPGPRA) and 362–383 (TLHA…PSKS). Disordered regions lie at residues 521 to 617 (VSCP…TDWG) and 648 to 672 (QFNT…PLNR). Polar residues-rich tracts occupy residues 523 to 544 (CPSN…TQTK) and 570 to 586 (YNAT…DSTV). Composition is skewed to low complexity over residues 587 to 602 (SSAS…SHNS) and 651 to 662 (TGKSKGDGSTSS).

The protein belongs to the DNA polymerase type-Y family. Interacts with PCNA1 and PCNA2. The interaction with PCNA2 is required for translesion synthesis (TLS) to repair UV photoproducts. Mg(2+) serves as cofactor. The cofactor is Mn(2+). As to expression, constitutively expressed in roots, stems, leaves, flowers and siliques.

The protein localises to the nucleus. It carries out the reaction DNA(n) + a 2'-deoxyribonucleoside 5'-triphosphate = DNA(n+1) + diphosphate. With respect to regulation, the enzyme in complex with the DNA substrate binds a third divalent metal cation. The binding of this third divalent cation, which is coordinated by water molecules and two oxygen atoms from DNA and dNTP, is essential for catalyzing the DNA synthesis. In terms of biological role, error-free DNA polymerase specifically involved in DNA repair. Plays an important role in translesion synthesis (TLS), where the normal high fidelity DNA polymerases cannot proceed and DNA synthesis stalls. Plays an important role in the repair of UV-induced pyrimidine dimers and confers resistance to ultraviolet light. Depending on the context, it inserts the correct base, but may cause base transitions and transversions. Forms a Schiff base with 5'-deoxyribose phosphate at abasic sites, but does not have lyase activity. Targets POLI to replication foci. Exhibits cyclobutane dimer nonmutagenic bypass activity in vitro. The polypeptide is DNA polymerase eta (POLH) (Arabidopsis thaliana (Mouse-ear cress)).